A 657-amino-acid chain; its full sequence is Polycomb protein suz12-A (657 aa).

The tract at residues threonine 335 to proline 363 is disordered. The span at serine 347–serine 358 shows a compositional bias: low complexity. A C2H2-type zinc finger spans residues leucine 413–histidine 436. Residues arginine 528 to phenylalanine 604 are VEFS-box.

The protein belongs to the VEFS (VRN2-EMF2-FIS2-SU(Z)12) family. Component of the prc2/eed-ezh2 complex.

It localises to the nucleus. Functionally, polycomb group (PcG) protein. Component of the prc2/eed-ezh2 complex, which methylates 'Lys-9' and 'Lys-27' of histone H3, leading to transcriptional repression of the affected target gene. The sequence is that of Polycomb protein suz12-A (suz12a) from Danio rerio (Zebrafish).